Reading from the N-terminus, the 101-residue chain is Small ribosomal subunit protein bS6 (101 aa).

This sequence belongs to the bacterial ribosomal protein bS6 family.

Its function is as follows. Binds together with bS18 to 16S ribosomal RNA. The protein is Small ribosomal subunit protein bS6 of Nitratidesulfovibrio vulgaris (strain ATCC 29579 / DSM 644 / CCUG 34227 / NCIMB 8303 / VKM B-1760 / Hildenborough) (Desulfovibrio vulgaris).